A 459-amino-acid chain; its full sequence is Serine protease HTRA1 (459 aa).

Residues 1-18 form the signal peptide; the sequence is MTMLWLAVLLTCGAPAAL. One can recognise an IGFBP N-terminal domain in the interval 22–92; the sequence is SGVGCPARCD…NGGVTRCQCP (71 aa). 8 cysteine pairs are disulfide-bonded: cysteine 26/cysteine 51, cysteine 30/cysteine 53, cysteine 35/cysteine 54, cysteine 42/cysteine 57, cysteine 65/cysteine 80, cysteine 74/cysteine 89, cysteine 91/cysteine 109, and cysteine 98/cysteine 134. Positions 74 to 136 constitute a Kazal-like domain; sequence CASGLRCVRN…IPIQRGDCQQ (63 aa). The interval 183 to 343 is serine protease; it reads GSGFIVSEDG…IPSDKIRKFM (161 aa). Catalysis depends on charge relay system residues histidine 199, aspartate 229, and serine 307. The PDZ domain maps to 344-446; it reads AESHNRQSTG…LQMVIRRGNE (103 aa).

This sequence belongs to the peptidase S1C family. Forms homotrimers. In the presence of substrate, may form higher-order multimers in a PDZ-independent manner.

It localises to the cell membrane. Its subcellular location is the secreted. The protein resides in the cytoplasm. The protein localises to the cytosol. In terms of biological role, serine protease with a variety of targets, including extracellular matrix proteins and proteoglycans such as biglycan, syndecan-4 and glypican-4. Through cleavage of proteoglycans, may release soluble FGF-glycosaminoglycan complexes that promote the range and intensity of FGF signals in the extracellular space. Consequently, facilitates inductive processes in the developing embryo, such as posteriorization, mesoderm induction and neuronal differentiation. Regulates the availability of insulin-like growth factors (IGFs) by cleaving IGF-binding proteins. Inhibits signaling mediated by TGF-beta family members. Consequently, may regulate many physiological processes. Intracellularly, degrades TSC2, leading to the activation of TSC2 downstream targets. The protein is Serine protease HTRA1 (htra1) of Xenopus laevis (African clawed frog).